The sequence spans 926 residues: Alpha-aminoadipic semialdehyde synthase, mitochondrial (926 aa).

A mitochondrion-targeting transit peptide spans 1 to 27; sequence MLRVSRTKLGRLSPSLSRGLHHKAVMA. The segment at 28 to 455 is lysine-ketoglutarate reductase; it reads LRREDVNAWE…DAVIASNGML (428 aa). N6-acetyllysine occurs at positions 48 and 56. K93 is modified (N6-acetyllysine; alternate). At K93 the chain carries N6-succinyllysine; alternate. K128 carries the N6-acetyllysine modification. K138 carries the N6-acetyllysine; alternate modification. At K138 the chain carries N6-succinyllysine; alternate. K274 carries the N6-succinyllysine modification. An N6-acetyllysine; alternate modification is found at K286. The residue at position 286 (K286) is an N6-succinyllysine; alternate. Residue K333 is modified to N6-succinyllysine. K458 carries the N6-acetyllysine; alternate modification. K458 is subject to N6-succinyllysine; alternate. The segment at 477–926 is saccharopine dehydrogenase; sequence MGTKKKVLVL…MYTTQSTIKL (450 aa). NAD(+) is bound by residues S488, D512, and Q516. N6-acetyllysine; alternate is present on residues K523 and K535. N6-succinyllysine; alternate occurs at positions 523 and 535. 3 residues coordinate NAD(+): L554, A576, and S577. 577 to 578 lines the L-saccharopine pocket; that stretch reads SY. K584 carries the post-translational modification N6-acetyllysine; alternate. K584 is subject to N6-succinyllysine; alternate. 3 residues coordinate NAD(+): L603, D604, and P605. Residue D604 participates in L-saccharopine binding. R703 serves as a coordination point for L-saccharopine. N6-acetyllysine is present on K707. 724-726 contributes to the L-saccharopine binding site; it reads TLR. An N6-succinyllysine modification is found at K732. The residue at position 739 (K739) is an N6-acetyllysine. K761 bears the N6-acetyllysine; alternate mark. K761 bears the N6-succinyllysine; alternate mark. K780 is subject to N6-acetyllysine.

The protein in the N-terminal section; belongs to the AlaDH/PNT family. It in the C-terminal section; belongs to the saccharopine dehydrogenase family. In terms of assembly, homotetramer.

The protein resides in the mitochondrion. The enzyme catalyses L-saccharopine + NADP(+) + H2O = L-lysine + 2-oxoglutarate + NADPH + H(+). The catalysed reaction is L-saccharopine + NAD(+) + H2O = (S)-2-amino-6-oxohexanoate + L-glutamate + NADH + H(+). It functions in the pathway amino-acid degradation; L-lysine degradation via saccharopine pathway; glutaryl-CoA from L-lysine: step 1/6. The protein operates within amino-acid degradation; L-lysine degradation via saccharopine pathway; glutaryl-CoA from L-lysine: step 2/6. Bifunctional enzyme that catalyzes the first two steps in lysine degradation. The protein is Alpha-aminoadipic semialdehyde synthase, mitochondrial of Bos taurus (Bovine).